Consider the following 340-residue polypeptide: Putative inactive cytochrome P450 family member 4Z2 (340 aa).

Topologically, residues 1–9 (MEPSWLQEL) are cytoplasmic. A helical; Signal-anchor for type II membrane protein transmembrane segment spans residues 10 to 30 (MAHPFLLLILLCMSLLLFQVI). Topologically, residues 31–340 (RLYQRRRWTI…AKYPEHQQRC (310 aa)) are lumenal.

The protein belongs to the cytochrome P450 family. Heme is required as a cofactor. As to expression, detected at low levels in mammary gland and mammary carcinoma.

Its subcellular location is the membrane. The chain is Putative inactive cytochrome P450 family member 4Z2 (CYP4Z2P) from Homo sapiens (Human).